We begin with the raw amino-acid sequence, 456 residues long: NADH-quinone oxidoreductase subunit N (456 aa).

14 consecutive transmembrane segments (helical) span residues 6–26 (LFAL…MLLA), 45–65 (VAAL…GALF), 75–95 (TAYA…AGVA), 97–117 (EAPA…GAGH), 118–138 (AATL…LFAF), 151–171 (FLVM…LIYA), 181–201 (WVGH…GLAF), 220–240 (PAGA…IAIL), 252–272 (LWSA…NVLA), 281–301 (MLGY…ASGA), 308–328 (VLFY…ASAM), 355–375 (GLLS…LYLF), 382–402 (ESWI…YYYI), and 426–446 (LLLI…LVLI).

Belongs to the complex I subunit 2 family. As to quaternary structure, NDH-1 is composed of 14 different subunits. Subunits NuoA, H, J, K, L, M, N constitute the membrane sector of the complex.

It is found in the cell inner membrane. The catalysed reaction is a quinone + NADH + 5 H(+)(in) = a quinol + NAD(+) + 4 H(+)(out). Functionally, NDH-1 shuttles electrons from NADH, via FMN and iron-sulfur (Fe-S) centers, to quinones in the respiratory chain. The immediate electron acceptor for the enzyme in this species is believed to be ubiquinone. Couples the redox reaction to proton translocation (for every two electrons transferred, four hydrogen ions are translocated across the cytoplasmic membrane), and thus conserves the redox energy in a proton gradient. The sequence is that of NADH-quinone oxidoreductase subunit N from Rhodopseudomonas palustris (strain BisA53).